The chain runs to 508 residues: MTLLQRLQAMSATTTRTILEGSISSFGGGTNEPLASKIPVLEESASHARYLKFIADGLIDEGLGSAVGSGSSIAVSVEDVVAGQAQDIQASEGSTDDADGSSHLALVFVKCFIIGFIILAAILGNMLVIVSVMRHRKLRIITNYFVVSLAVADMLVALCAMTFNASVMISGKWMFGSVMCDMWNSFDVYFSTASIMHLCCISVDRYYAIVQPLDYPLIMTQRRVFIMLLMVWLSPALLSFLPICSGWYTTTENYKYLKSNPHICEFKVNKAYAIVSSSMSFWIPGIVMLSMYYRIYQEADRQERLVYRSKVAALLLEKHLQISQIPKPRPSIQVEQSTISTMRRERKAARTLGIIMSAFLICWLPFFLWYIVSSLCDSCITPRLLVGILFWIGYFNSALNPIIYAYFNRDFRAAFKKTLKSLFPYAFYFCRRGRGRDDDRDLEFGGPSRRGTNGAQRTGSGSAEMANCVNSTASSEIHMSVMRARQYAVNVTPTTDAQMQQLHPLYTN.

At 1–111 (MTLLQRLQAM…SHLALVFVKC (111 aa)) the chain is on the extracellular side. The chain crosses the membrane as a helical span at residues 112-132 (FIIGFIILAAILGNMLVIVSV). At 133-139 (MRHRKLR) the chain is on the cytoplasmic side. A helical membrane pass occupies residues 140 to 160 (IITNYFVVSLAVADMLVALCA). Topologically, residues 161–186 (MTFNASVMISGKWMFGSVMCDMWNSF) are extracellular. Asn-164 carries N-linked (GlcNAc...) asparagine glycosylation. A helical transmembrane segment spans residues 187 to 209 (DVYFSTASIMHLCCISVDRYYAI). Topologically, residues 210–223 (VQPLDYPLIMTQRR) are cytoplasmic. Residues 224–244 (VFIMLLMVWLSPALLSFLPIC) form a helical membrane-spanning segment. The Extracellular segment spans residues 245 to 270 (SGWYTTTENYKYLKSNPHICEFKVNK). The helical transmembrane segment at 271-291 (AYAIVSSSMSFWIPGIVMLSM) threads the bilayer. Residues 292–351 (YYRIYQEADRQERLVYRSKVAALLLEKHLQISQIPKPRPSIQVEQSTISTMRRERKAART) are Cytoplasmic-facing. Residues 352 to 372 (LGIIMSAFLICWLPFFLWYIV) traverse the membrane as a helical segment. At 373-383 (SSLCDSCITPR) the chain is on the extracellular side. A helical membrane pass occupies residues 384 to 404 (LLVGILFWIGYFNSALNPIIY). The Cytoplasmic segment spans residues 405–508 (AYFNRDFRAA…MQQLHPLYTN (104 aa)). Residues 440–464 (RDLEFGGPSRRGTNGAQRTGSGSAE) are disordered. The segment covering 450–461 (RGTNGAQRTGSG) has biased composition (polar residues).

It belongs to the G-protein coupled receptor 1 family. In the adult, expressed in the superior protocerebrum and the optic lobe medulla of the central nervous system, nurse cells of egg chambers in the ovary at oogenic stages 1-10, and spermatogonia and spermatocytes in the testis. Expressed in embryonic and larval ventral nerve cord and brain lobe, and the larval imaginal disk and larval salivary gland. Also expressed in larval synaptic boutons and retinal cells in the optic disk.

It is found in the cell membrane. In terms of biological role, autoreceptor for octopamine, which is a neurotransmitter, neurohormone, and neuromodulator in invertebrates. Negatively regulates synaptic growth by activating the inhibitory G protein Galphao and limiting cAMP production. Antagonizes the action of Octbeta2R which stimulates synaptic growth. This Drosophila melanogaster (Fruit fly) protein is Octopamine receptor beta-1R.